Here is a 584-residue protein sequence, read N- to C-terminus: Potassium-transporting ATPase potassium-binding subunit (584 aa).

10 helical membrane passes run 8–28 (FLVL…EFMF), 65–85 (SFAV…FILQ), 139–159 (VQNF…IYGF), 172–192 (VLLL…ALVL), 262–282 (FTDL…CFMF), 292–312 (GIAI…LGIW), 398–418 (GLYC…LMVG), 440–460 (ILIP…ITAG), 507–527 (MFVG…AFVA), and 544–564 (LFII…FLPA).

The protein belongs to the KdpA family. In terms of assembly, the system is composed of three essential subunits: KdpA, KdpB and KdpC.

It localises to the cell membrane. Functionally, part of the high-affinity ATP-driven potassium transport (or Kdp) system, which catalyzes the hydrolysis of ATP coupled with the electrogenic transport of potassium into the cytoplasm. This subunit binds the extracellular potassium ions and delivers the ions to the membrane domain of KdpB through an intramembrane tunnel. The sequence is that of Potassium-transporting ATPase potassium-binding subunit from Methanoregula boonei (strain DSM 21154 / JCM 14090 / 6A8).